The chain runs to 240 residues: Cysteine-rich venom protein ablomin (240 aa).

The N-terminal stretch at 1–19 (MIVFIVLPILAAVLQQSSG) is a signal peptide. The SCP domain occupies 38–166 (VDLHNSLRRS…EYSYFYVCQY (129 aa)). Intrachain disulfides connect Cys-75-Cys-153, Cys-92-Cys-167, Cys-148-Cys-164, Cys-186-Cys-193, Cys-189-Cys-198, Cys-202-Cys-235, Cys-211-Cys-229, and Cys-220-Cys-233. One can recognise a ShKT domain in the interval 202–235 (CTQEDVFTNCNSLVQQSNCQHNYIKTNCPASCFC).

It belongs to the CRISP family. As to expression, expressed by the venom gland.

The protein localises to the secreted. Its function is as follows. Blocks contraction of smooth muscle elicited by high potassium-induced depolarization, but does not block caffeine-stimulated contraction. Since high potassium-treatment activates voltage-gated channels and caffeine exposure activates ryanodine receptors, this toxin may target L-type voltage-gated calcium channels (Cav) (and not ryanodine receptors) on smooth muscle. This toxin also shows a little inhibition on cyclic nucleotide-gated CNGA1 channel. The polypeptide is Cysteine-rich venom protein ablomin (Gloydius blomhoffii (Mamushi)).